Here is a 157-residue protein sequence, read N- to C-terminus: uncharacterized protein (157 aa).

The 152-residue stretch at 6–157 folds into the HTH marR-type domain; sequence HDELFQAIQQ…AFFNLWIKYM (152 aa). A DNA-binding region (H-T-H motif) is located at residues 66 to 89; that stretch reads NSFLASRLHISKAAVSKAVHALLK.

Its subcellular location is the cytoplasm. This is an uncharacterized protein from Bacillus subtilis (strain 168).